The following is a 400-amino-acid chain: Exodeoxyribonuclease 7 large subunit (400 aa).

This sequence belongs to the XseA family. In terms of assembly, heterooligomer composed of large and small subunits.

The protein localises to the cytoplasm. The catalysed reaction is Exonucleolytic cleavage in either 5'- to 3'- or 3'- to 5'-direction to yield nucleoside 5'-phosphates.. Functionally, bidirectionally degrades single-stranded DNA into large acid-insoluble oligonucleotides, which are then degraded further into small acid-soluble oligonucleotides. This is Exodeoxyribonuclease 7 large subunit from Clostridium kluyveri (strain NBRC 12016).